A 428-amino-acid chain; its full sequence is Enolase (428 aa).

(2R)-2-phosphoglycerate is bound at residue Q165. E207 acts as the Proton donor in catalysis. Positions 244, 283, and 310 each coordinate Mg(2+). (2R)-2-phosphoglycerate contacts are provided by K335, R364, S365, and K386. The Proton acceptor role is filled by K335.

Belongs to the enolase family. It depends on Mg(2+) as a cofactor.

Its subcellular location is the cytoplasm. It localises to the secreted. The protein localises to the cell surface. It carries out the reaction (2R)-2-phosphoglycerate = phosphoenolpyruvate + H2O. The protein operates within carbohydrate degradation; glycolysis; pyruvate from D-glyceraldehyde 3-phosphate: step 4/5. Catalyzes the reversible conversion of 2-phosphoglycerate (2-PG) into phosphoenolpyruvate (PEP). It is essential for the degradation of carbohydrates via glycolysis. This chain is Enolase, found in Chlamydia pneumoniae (Chlamydophila pneumoniae).